We begin with the raw amino-acid sequence, 505 residues long: One cut domain family member 2 (505 aa).

Disordered stretches follow at residues 29–94 (LGTL…GTAA), 165–190 (KFHH…RLSG), and 275–333 (EQHL…QLEE). Gly residues predominate over residues 35-56 (PVGGGSGGGGGGGGGGGGGGPG). The segment covering 167 to 187 (HHPHPHHHPHHHHHHHHHHQR) has biased composition (basic residues). A DNA-binding region (CUT) is located at residues 325-411 (VATSGQLEEI…QRMSALRLAA (87 aa)). A DNA-binding region (homeobox) is located at residues 427 to 486 (QKKSRLVFTDLQRRTLFAIFKENKRPSKEMQITISQQLGLELTTVSNFFMNARRRSLEKW).

This sequence belongs to the CUT homeobox family.

Its subcellular location is the nucleus. In terms of biological role, transcriptional activator. Activates the transcription of a number of liver genes such as HNF3B. The sequence is that of One cut domain family member 2 (Onecut2) from Mus musculus (Mouse).